The following is a 501-amino-acid chain: Galactokinase (501 aa).

Alpha-D-galactose-binding residues include Arg-54, Glu-60, His-61, and Asp-63. ATP contacts are provided by Gly-158, Gly-160, Ser-162, and Ser-163. Alpha-D-galactose is bound at residue Asp-207. Asp-207 functions as the Proton acceptor in the catalytic mechanism. Ser-250 and Lys-252 together coordinate ATP. Tyr-260 lines the alpha-D-galactose pocket.

The protein belongs to the GHMP kinase family. GalK subfamily.

It carries out the reaction alpha-D-galactose + ATP = alpha-D-galactose 1-phosphate + ADP + H(+). Its pathway is carbohydrate metabolism; galactose metabolism. The chain is Galactokinase (galK) from Dictyostelium discoideum (Social amoeba).